We begin with the raw amino-acid sequence, 598 residues long: Pantothenate kinase 1 (598 aa).

The disordered stretch occupies residues 32–161; it reads ARPGDQGKAG…SPGAPVGTSA (130 aa). Over residues 38–49 the composition is skewed to gly residues; the sequence is GKAGGGSPGWGC. At Ser-215 the chain carries Phosphoserine. The short motif at 218–235 is the Nucleolar localization signal element; it reads KKCRLRRRMDSGRKNRPP. Residue Glu-363 is the Proton acceptor of the active site. 3 residues coordinate acetyl-CoA: Ser-417, Ser-420, and Arg-432.

It belongs to the type II pantothenate kinase family. In terms of assembly, homodimer. In terms of tissue distribution, expressed at high levels in brain, heart, kidney, liver, skeletal muscle and testis. Detected at much lower levels in kidney, liver, brain and testis and not detected in heart or skeletal muscle.

It is found in the cytoplasm. Its subcellular location is the nucleus. It localises to the nucleolus. The protein localises to the cytosol. The protein resides in the cytoplasmic vesicle. It is found in the clathrin-coated vesicle. Its subcellular location is the recycling endosome. The enzyme catalyses (R)-pantothenate + ATP = (R)-4'-phosphopantothenate + ADP + H(+). It functions in the pathway cofactor biosynthesis; coenzyme A biosynthesis; CoA from (R)-pantothenate: step 1/5. Its activity is regulated as follows. Regulated by feedback inhibition by CoA and its thioesters. Catalyzes the phosphorylation of pantothenate to generate 4'-phosphopantothenate in the first and rate-determining step of coenzyme A (CoA) synthesis. The chain is Pantothenate kinase 1 (PANK1) from Homo sapiens (Human).